The following is an 874-amino-acid chain: Leucine--tRNA ligase (874 aa).

The 'HIGH' region motif lies at 43-53; the sequence is PYPSGRIHIGH. The 'KMSKS' region signature appears at 630–634; it reads KMSKS. Lysine 633 is a binding site for ATP.

It belongs to the class-I aminoacyl-tRNA synthetase family.

It is found in the cytoplasm. It carries out the reaction tRNA(Leu) + L-leucine + ATP = L-leucyl-tRNA(Leu) + AMP + diphosphate. This Bradyrhizobium sp. (strain ORS 278) protein is Leucine--tRNA ligase.